Consider the following 504-residue polypeptide: MFS antiporter QDR2 (504 aa).

Polar residues predominate over residues 1–14; sequence MLSTTQSVTEPTEV. Residues 1–23 form a disordered region; it reads MLSTTQSVTEPTEVTSKKVEDIE. The Cytoplasmic segment spans residues 1 to 41; the sequence is MLSTTQSVTEPTEVTSKKVEDIEKENDEETPYSIFTSYDRL. The helical transmembrane segment at 42 to 62 threads the bilayer; it reads VLIVILSLIGFWSTISSPIYF. Residues 63 to 75 lie on the Extracellular side of the membrane; it reads PALPTLTSYFHTS. The helical transmembrane segment at 76-96 threads the bilayer; it reads SSIMNISVVAYLIFQGIAPTI. At 97–106 the chain is on the cytoplasmic side; it reads SSNLADTFGR. Residues 107-129 form a helical membrane-spanning segment; that stretch reads RPVILASIIVFCASCVAISQTNV. Topologically, residues 130–132 are extracellular; the sequence is YWL. Residues 133–155 form a helical membrane-spanning segment; sequence LAVLRCIQAAGIAAVISISSGVA. At 156 to 169 the chain is on the cytoplasmic side; sequence GDVCTRANRGSMVG. The helical transmembrane segment at 170-190 threads the bilayer; sequence AVAGLQLVGNGIGGLVGAALI. Residues 191–198 lie on the Extracellular side of the membrane; sequence SSFNSWRS. The chain crosses the membrane as a helical span at residues 199–219; that stretch reads IFIFLTIGGGVTFILAIFILP. At 220–278 the chain is on the cytoplasmic side; the sequence is ETSRKLVGNGSVVPKNILNKSPYIYLPHFKKRMNNDITTIVPATRFDLLGPLKIFFQKN. A helical membrane pass occupies residues 279-299; it reads VFCTLLPVGIHFAAWTMVLTS. Residues 300-311 lie on the Extracellular side of the membrane; that stretch reads LSTELESRYHYS. The chain crosses the membrane as a helical span at residues 312–332; the sequence is VMHVGLIYLPQGIACIAGSLV. Over 333–370 the chain is Cytoplasmic; it reads VGKSLDWYYRYRKTIYDQEVECLPLDERPQFNIVATRL. A helical membrane pass occupies residues 371–391; that stretch reads TLSVVPALLMIIGLVIFGWCI. Residues 392-396 are Extracellular-facing; it reads QYKRH. A helical membrane pass occupies residues 397 to 417; it reads IISIIISTILVSFSASVFIAI. Topologically, residues 418–438 are cytoplasmic; that stretch reads CTTMLVDLYPNNGSGSTSCLN. Residues 439-456 traverse the membrane as a helical segment; that stretch reads LMRCWLAALGAGVLDSMI. At 457 to 460 the chain is on the extracellular side; the sequence is NAMN. The chain crosses the membrane as a helical span at residues 461–483; the sequence is VGGTYTVVAGFCILFDLALIYVL. Over 484 to 504 the chain is Cytoplasmic; it reads HNAKKKFSNSGPTTTKSPPKQ.

The protein belongs to the major facilitator superfamily. CAR1 family.

The protein resides in the cell membrane. Functionally, MFS antiporter that does not display functional linkage as drug transporter and performs functions that significantly affect biofilm development and virulence. No substrate for transport has been identified yet, but plays an important role in the growth in the host. In Candida albicans (strain SC5314 / ATCC MYA-2876) (Yeast), this protein is MFS antiporter QDR2 (QDR2).